Reading from the N-terminus, the 239-residue chain is Purine nucleoside phosphorylase DeoD-type 1 (239 aa).

H5 is a binding site for a purine D-ribonucleoside. Residues G21, R25, R44, and 88–91 (RVGS) contribute to the phosphate site. Residues 180–182 (EME) and 204–205 (SD) contribute to the a purine D-ribonucleoside site. D205 (proton donor) is an active-site residue.

The protein belongs to the PNP/UDP phosphorylase family. As to quaternary structure, homohexamer; trimer of homodimers.

It catalyses the reaction a purine D-ribonucleoside + phosphate = a purine nucleobase + alpha-D-ribose 1-phosphate. The enzyme catalyses a purine 2'-deoxy-D-ribonucleoside + phosphate = a purine nucleobase + 2-deoxy-alpha-D-ribose 1-phosphate. Functionally, catalyzes the reversible phosphorolytic breakdown of the N-glycosidic bond in the beta-(deoxy)ribonucleoside molecules, with the formation of the corresponding free purine bases and pentose-1-phosphate. The protein is Purine nucleoside phosphorylase DeoD-type 1 of Vibrio parahaemolyticus serotype O3:K6 (strain RIMD 2210633).